Consider the following 1807-residue polypeptide: Triacetic acid lactone synthase cle1 (1807 aa).

The Starter acyltransferase (SAT) domain maps to 107–280 (LAPLTVIIHI…ANVPVNGRYH (174 aa)). The Ketosynthase family 3 (KS3) domain maps to 385 to 795 (DTSIAIIGAA…GNNTAIIICQ (411 aa)). Active-site for beta-ketoacyl synthase activity residues include Cys540, His675, and His718. The Malonyl-CoA:ACP transacylase (MAT) domain occupies 919 to 1176 (SKAVYDSSYH…LGPCIWLEAG (258 aa)). Residues 1272–1398 (PVIDGLISLE…GTVIVDDERT (127 aa)) form an N-terminal hotdog fold region. A PKS/mFAS DH domain is found at 1272–1573 (PVIDGLISLE…FIRTSTSALQ (302 aa)). The active-site Proton acceptor; for dehydratase activity is His1304. The C-terminal hotdog fold stretch occupies residues 1416–1573 (TVFSAPRGVA…FIRTSTSALQ (158 aa)). Residue Asp1475 is the Proton donor; for dehydratase activity of the active site. Positions 1605-1679 (ANVWSLTVNL…IICERITAQT (75 aa)) constitute a Carrier 1 domain. Residue Ser1639 is modified to O-(pantetheine 4'-phosphoryl)serine. The interval 1690 to 1720 (GNSTSNTTSSSSQCTPSSSFESDSDTQATEL) is disordered. A compositionally biased stretch (low complexity) spans 1692–1710 (STSNTTSSSSQCTPSSSFE). The 77-residue stretch at 1721-1797 (SLSAPTMEKV…DLHALVMRRG (77 aa)) folds into the Carrier 2 domain. Ser1757 is modified (O-(pantetheine 4'-phosphoryl)serine).

Requires pantetheine 4'-phosphate as cofactor.

It participates in secondary metabolite biosynthesis; terpenoid biosynthesis. Non-reducing polyketide synthase; part of the cluster A that mediates the biosynthesis of chevalone E and its oxidized derivatives that possess a unique five-membered lactone ring and can synergistically enhance the cytotoxicity of doxorubicin (DOX) in breast cancer cells. Within the pathway, cle1 takes part to the biosynthesis of the molecular scaffold via the synthesis the alpha-pyrone triacetic acid lactone (TAL) from one molecule of acetyl-CoA and two molecules of malonyl-CoA. The molecular scaffold is commonly biosynthesized by a series of enzymes including the non-reducing polyketide synthase (NR-PKS) cle1 that produces the alpha-pyrone triacetic acid lactone (TAL); The membrane-bound prenyltransferase cle5 that accepts TAL as its substrate to perform a C-3 geranylgeranylation reaction, in which the pathway-dedicated GGPS cle6 is required to provide GGPP, the other substrate of cle5; the FAD-dependent monooxygenase Cle3 that forms an (S)-epoxide ring at the terminal olefin of the geranylgeranyl group; and the terpene cyclase Cle7 that catalyzes the cyclization of the prenyl group that yields the pentacyclic pathway intermediate chevalone E. Chevalone E can derivatize into seven new oxidized analogs by the cytochrome P450 monooxygenases cle2 (acting at C-20) and cle4 (acting at C-11 and C-12). This chain is Triacetic acid lactone synthase cle1, found in Aspergillus versicolor.